Here is a 298-residue protein sequence, read N- to C-terminus: Inosose dehydratase (298 aa).

It belongs to the IolE/MocC family. It depends on glutathione as a cofactor. The cofactor is Co(2+). Requires Mn(2+) as cofactor.

The enzyme catalyses scyllo-inosose = 3D-3,5/4-trihydroxycyclohexane-1,2-dione + H2O. It participates in polyol metabolism; myo-inositol degradation into acetyl-CoA; acetyl-CoA from myo-inositol: step 2/7. Its function is as follows. Catalyzes the dehydration of inosose (2-keto-myo-inositol, 2KMI or 2,4,6/3,5-pentahydroxycyclohexanone) to 3D-(3,5/4)-trihydroxycyclohexane-1,2-dione (D-2,3-diketo-4-deoxy-epi-inositol). The protein is Inosose dehydratase of Clostridium tetani (strain Massachusetts / E88).